A 353-amino-acid chain; its full sequence is Tetraacyldisaccharide 4'-kinase (353 aa).

Residue 66-73 coordinates ATP; it reads TVGGTGKT.

Belongs to the LpxK family.

The enzyme catalyses a lipid A disaccharide + ATP = a lipid IVA + ADP + H(+). It functions in the pathway glycolipid biosynthesis; lipid IV(A) biosynthesis; lipid IV(A) from (3R)-3-hydroxytetradecanoyl-[acyl-carrier-protein] and UDP-N-acetyl-alpha-D-glucosamine: step 6/6. Its function is as follows. Transfers the gamma-phosphate of ATP to the 4'-position of a tetraacyldisaccharide 1-phosphate intermediate (termed DS-1-P) to form tetraacyldisaccharide 1,4'-bis-phosphate (lipid IVA). The chain is Tetraacyldisaccharide 4'-kinase from Geobacter sulfurreducens (strain ATCC 51573 / DSM 12127 / PCA).